Consider the following 180-residue polypeptide: ATP-dependent protease subunit HslV (180 aa).

Residue Thr7 is part of the active site. 3 residues coordinate Na(+): Ala164, Cys167, and Thr170.

It belongs to the peptidase T1B family. HslV subfamily. A double ring-shaped homohexamer of HslV is capped on each side by a ring-shaped HslU homohexamer. The assembly of the HslU/HslV complex is dependent on binding of ATP.

The protein resides in the cytoplasm. It carries out the reaction ATP-dependent cleavage of peptide bonds with broad specificity.. With respect to regulation, allosterically activated by HslU binding. In terms of biological role, protease subunit of a proteasome-like degradation complex believed to be a general protein degrading machinery. The chain is ATP-dependent protease subunit HslV from Brevibacillus brevis (strain 47 / JCM 6285 / NBRC 100599).